We begin with the raw amino-acid sequence, 500 residues long: Glycerol kinase (500 aa).

An ADP-binding site is contributed by T11. The ATP site is built by T11, T12, and S13. Sn-glycerol 3-phosphate is bound at residue T11. Position 15 (R15) interacts with ADP. Residues R81, E82, Y133, and D242 each contribute to the sn-glycerol 3-phosphate site. The glycerol site is built by R81, E82, Y133, D242, and Q243. The ADP site is built by T264 and G307. Residues T264, G307, Q311, and G411 each coordinate ATP. G411 contributes to the ADP binding site.

It belongs to the FGGY kinase family.

It carries out the reaction glycerol + ATP = sn-glycerol 3-phosphate + ADP + H(+). Its pathway is polyol metabolism; glycerol degradation via glycerol kinase pathway; sn-glycerol 3-phosphate from glycerol: step 1/1. With respect to regulation, inhibited by fructose 1,6-bisphosphate (FBP). Functionally, key enzyme in the regulation of glycerol uptake and metabolism. Catalyzes the phosphorylation of glycerol to yield sn-glycerol 3-phosphate. In Bradyrhizobium diazoefficiens (strain JCM 10833 / BCRC 13528 / IAM 13628 / NBRC 14792 / USDA 110), this protein is Glycerol kinase.